Reading from the N-terminus, the 122-residue chain is Small ribosomal subunit protein bS6 (122 aa).

It belongs to the bacterial ribosomal protein bS6 family.

Binds together with bS18 to 16S ribosomal RNA. In Vibrio cholerae serotype O1 (strain ATCC 39541 / Classical Ogawa 395 / O395), this protein is Small ribosomal subunit protein bS6.